The sequence spans 185 residues: MIVLGIDPGSRRCGYGVVAREGARLTVVESGVLVPGDLPMAQRLGRILEGLDALIARARPVEASVESVFSGASPRSALVLGQARGVALAAAARAGLPVFEYAPSEVKLAFTGNGRAGKDQMLRTARMLLGAAPDLSDEADALAIAVCHLARRAFAVPAAGAGRAAAARAAAARLRPSRRDHRGTP.

Catalysis depends on residues Asp7, Glu66, and Asp137. Positions 7, 66, and 137 each coordinate Mg(2+).

It belongs to the RuvC family. As to quaternary structure, homodimer which binds Holliday junction (HJ) DNA. The HJ becomes 2-fold symmetrical on binding to RuvC with unstacked arms; it has a different conformation from HJ DNA in complex with RuvA. In the full resolvosome a probable DNA-RuvA(4)-RuvB(12)-RuvC(2) complex forms which resolves the HJ. Mg(2+) is required as a cofactor.

The protein resides in the cytoplasm. It catalyses the reaction Endonucleolytic cleavage at a junction such as a reciprocal single-stranded crossover between two homologous DNA duplexes (Holliday junction).. The RuvA-RuvB-RuvC complex processes Holliday junction (HJ) DNA during genetic recombination and DNA repair. Endonuclease that resolves HJ intermediates. Cleaves cruciform DNA by making single-stranded nicks across the HJ at symmetrical positions within the homologous arms, yielding a 5'-phosphate and a 3'-hydroxyl group; requires a central core of homology in the junction. The consensus cleavage sequence is 5'-(A/T)TT(C/G)-3'. Cleavage occurs on the 3'-side of the TT dinucleotide at the point of strand exchange. HJ branch migration catalyzed by RuvA-RuvB allows RuvC to scan DNA until it finds its consensus sequence, where it cleaves and resolves the cruciform DNA. The protein is Crossover junction endodeoxyribonuclease RuvC of Anaeromyxobacter sp. (strain K).